Reading from the N-terminus, the 485-residue chain is UDP-N-acetylmuramate--L-alanine ligase (485 aa).

Residue 120–126 (GSHGKTT) participates in ATP binding.

Belongs to the MurCDEF family.

The protein localises to the cytoplasm. It carries out the reaction UDP-N-acetyl-alpha-D-muramate + L-alanine + ATP = UDP-N-acetyl-alpha-D-muramoyl-L-alanine + ADP + phosphate + H(+). Its pathway is cell wall biogenesis; peptidoglycan biosynthesis. Cell wall formation. The polypeptide is UDP-N-acetylmuramate--L-alanine ligase (Rickettsia peacockii (strain Rustic)).